Consider the following 484-residue polypeptide: Monocarboxylate transporter 2 (484 aa).

Over Met-1–Asp-16 the chain is Cytoplasmic. A helical transmembrane segment spans residues Gly-17–Phe-37. Residues Pro-38–Ala-60 are Extracellular-facing. A helical transmembrane segment spans residues Trp-61–Val-81. Residues Asn-82 to Arg-87 are Cytoplasmic-facing. Residues Pro-88 to Asn-108 form a helical membrane-spanning segment. At Ser-109 to Thr-116 the chain is on the extracellular side. The chain crosses the membrane as a helical span at residues Ile-117–Gly-137. The Cytoplasmic segment spans residues Lys-138 to Arg-144. The helical transmembrane segment at Pro-145–Phe-165 threads the bilayer. At Asn-166–Gly-174 the chain is on the extracellular side. A helical membrane pass occupies residues Trp-175–Leu-195. The Cytoplasmic portion of the chain corresponds to Met-196–Gly-245. The interval Thr-201 to Ser-224 is disordered. Residues Phe-246 to Phe-266 form a helical membrane-spanning segment. Residues Leu-267 to Ala-282 are Extracellular-facing. A helical transmembrane segment spans residues Leu-283–Ala-303. Over Asn-304–Arg-311 the chain is Cytoplasmic. Residues Ile-312–Leu-332 form a helical membrane-spanning segment. Residues Ala-333 to Pro-337 are Extracellular-facing. Residues Ala-338–Phe-358 traverse the membrane as a helical segment. Over Glu-359–Ser-372 the chain is Cytoplasmic. A helical membrane pass occupies residues Ala-373–Gly-393. Over Lys-394 to Met-405 the chain is Extracellular. The chain crosses the membrane as a helical span at residues Tyr-406–Ile-426. The Cytoplasmic segment spans residues Asn-427 to Ile-484. The interval Arg-437 to Ile-484 is disordered. Composition is skewed to basic and acidic residues over residues Pro-449–Ser-465 and Pro-475–Ile-484.

Belongs to the major facilitator superfamily. Monocarboxylate porter (TC 2.A.1.13) family. As to quaternary structure, homodimer. Interacts with GRID2IP. Interacts with EMB; interaction mediates SLC16A7 targeting to the plasma membrane. Interacts with isoform 2 of BSG. As to expression, abundant on the surface of hepatocytes. Present on parietal cells of the oxyntic gland of the stomach, on the basolateral surface of epithelial cells in the collecting ducts of the kidney, on sperm tails throughout the epididymis. Expressed in mitochondria-rich skeletal muscle fibers and cardiac myocytes (at protein level).

The protein resides in the cell membrane. It localises to the basolateral cell membrane. The protein localises to the cytoplasm. It carries out the reaction pyruvate(out) + H(+)(out) = pyruvate(in) + H(+)(in). The catalysed reaction is 3-methyl-2-oxobutanoate(out) + H(+)(out) = 3-methyl-2-oxobutanoate(in) + H(+)(in). The enzyme catalyses (S)-lactate(in) + H(+)(in) = (S)-lactate(out) + H(+)(out). It catalyses the reaction acetoacetate(out) + H(+)(out) = acetoacetate(in) + H(+)(in). It carries out the reaction (R)-3-hydroxybutanoate(out) + H(+)(out) = (R)-3-hydroxybutanoate(in) + H(+)(in). The catalysed reaction is 4-methyl-2-oxopentanoate(out) + H(+)(out) = 4-methyl-2-oxopentanoate(in) + H(+)(in). The enzyme catalyses (S)-3-hydroxybutanoate(out) + H(+)(out) = (S)-3-hydroxybutanoate(in) + H(+)(in). Its activity is regulated as follows. Transport activity exhibits steep dependence on substrate concentration. Substrate concentration sensitivity of SLC16A7 arises from the strong inter-subunit cooperativity of the SLC16A7 dimer during transport. Inhibited by AR-C155858. Its function is as follows. Proton-coupled monocarboxylate symporter. Catalyzes the rapid transport across the plasma membrane of monocarboxylates such as L-lactate, pyruvate and ketone bodies, acetoacetate, beta-hydroxybutyrate and acetate. Dimerization is functionally required and both subunits work cooperatively in transporting substrate. In Mesocricetus auratus (Golden hamster), this protein is Monocarboxylate transporter 2 (SLC16A7).